The chain runs to 576 residues: K(+)/H(+) antiporter NhaP2 (576 aa).

13 helical membrane passes run 6 to 26, 34 to 54, 58 to 78, 87 to 107, 109 to 129, 163 to 183, 185 to 205, 219 to 239, 242 to 262, 271 to 291, 299 to 319, 335 to 355, and 359 to 379; these read INSFFLIGALLTAVSVLLSPM, ILLIFLAVGILAGEDGPGGIL, YSTAYLVSNLALAIILLDGGM, VALWPALSLATFGVAITTSIT, MMAAWLFDLHWLQGLLVGAIV, PMAVFLTVTLIAILANVDTEM, FSFMFISFIKQFGLGICLGLG, LADGLYSILVLSGGLIIYAAS, LGGSGILSIYLVGLFLGNKPT, VLDGMTWVSQIGMFLVLGLLL, ILIPGFALAFGMILFARPVAV, WFISWVGLRGAVPIILAVFPM, and LPGAQLYFNLAFFVVLVSLLV. One can recognise an RCK C-terminal domain in the interval 405-486; that stretch reads SGVEIYPSSE…LEALSNLFSQ (82 aa).

This sequence belongs to the monovalent cation:proton antiporter 1 (CPA1) transporter (TC 2.A.36) family. NhaP2 subfamily.

It is found in the cell inner membrane. It catalyses the reaction K(+)(in) + H(+)(out) = K(+)(out) + H(+)(in). K(+)/H(+) antiporter that extrudes potassium in exchange for external protons and maintains the internal concentration of potassium under toxic levels. The polypeptide is K(+)/H(+) antiporter NhaP2 (Shewanella baltica (strain OS223)).